The chain runs to 436 residues: MTTGFFGDVSKITFEGADSTNPLAFRHYNPDEVILGKRMEEHLRFATCYWHNFVWPGGDPFGGQTFDRPWFKDTMHAAKLKADVAFEMFTLLQSPYYCFHDADVRPEGANFAENTRNLNEIVDYFAQKQEETGVKLLWGTANLFSNARYMSGASTNPDPDVFAFSAATIKTCMDATHRLGGENYVLWGGREGYETLLNTDLAQEDQQMGRMLNMVVEYKHKIGFKGAILVEPKPQEPSKHQYDYDAATVYGFLKRHGLENEVKLNLEQGHAILAGHSFEHEIATAQALGIFGSIDMNRNDYQSGWDTDQFPNNTPEVALAYYHILKHGGFTTGGTNFDAKLRRQSIDAEDLLMAHIGGMDICARGFKAAAAMIEDGTLDQFVTDRYAGWQTDPAQDMLAGKLSLDEIAKRVEAEDINPKPRSGRQEYLENLINRFV.

Residues His-100 and Asp-103 contribute to the active site. The Mg(2+) site is built by Glu-231, Glu-267, His-270, Asp-295, Asp-306, Asp-308, and Asp-338.

This sequence belongs to the xylose isomerase family. As to quaternary structure, homotetramer. Mg(2+) serves as cofactor.

Its subcellular location is the cytoplasm. The enzyme catalyses alpha-D-xylose = alpha-D-xylulofuranose. The sequence is that of Xylose isomerase from Ruegeria sp. (strain TM1040) (Silicibacter sp.).